Consider the following 730-residue polypeptide: Guanylate cyclase soluble subunit alpha-2 (730 aa).

The disordered stretch occupies residues 1-53 (MSRRKISSESFSSLGSDYLETSPEEEGECPLSKLCWNGSRSPPGPPGSRAAAM). One can recognise a Guanylate cyclase domain in the interval 519 to 646 (TMLFSDIVGF…NNVTLASKFE (128 aa)).

It belongs to the adenylyl cyclase class-4/guanylyl cyclase family. As to quaternary structure, heterodimer of an alpha and a beta chain.

It is found in the cytoplasm. The enzyme catalyses GTP = 3',5'-cyclic GMP + diphosphate. With respect to regulation, activated by nitric oxide in the presence of magnesium or manganese ions. Its function is as follows. Has guanylyl cyclase on binding to the beta-1 subunit. The polypeptide is Guanylate cyclase soluble subunit alpha-2 (Gucy1a2) (Rattus norvegicus (Rat)).